The primary structure comprises 71 residues: Sec-independent protein translocase protein TatA (71 aa).

The helical transmembrane segment at 9–29 (LLLILAIVVILFGASRLPALG) threads the bilayer. The tract at residues 43–71 (FGGEDEKPTASGNGSTPTQSSSDQGSKQA) is disordered. The segment covering 52-71 (ASGNGSTPTQSSSDQGSKQA) has biased composition (polar residues).

It belongs to the TatA/E family. The Tat system comprises two distinct complexes: a TatABC complex, containing multiple copies of TatA, TatB and TatC subunits, and a separate TatA complex, containing only TatA subunits. Substrates initially bind to the TatABC complex, which probably triggers association of the separate TatA complex to form the active translocon.

It is found in the cell inner membrane. Part of the twin-arginine translocation (Tat) system that transports large folded proteins containing a characteristic twin-arginine motif in their signal peptide across membranes. TatA could form the protein-conducting channel of the Tat system. The polypeptide is Sec-independent protein translocase protein TatA (Anaeromyxobacter dehalogenans (strain 2CP-C)).